We begin with the raw amino-acid sequence, 198 residues long: Large ribosomal subunit protein bL9 (198 aa).

The protein belongs to the bacterial ribosomal protein bL9 family.

Binds to the 23S rRNA. The protein is Large ribosomal subunit protein bL9 of Bartonella tribocorum (strain CIP 105476 / IBS 506).